Consider the following 490-residue polypeptide: MKEVDENSNVELFEVKLKPILGIEPKVYVFLTTIILLLSLISTLIIIPKFKNPGAYLKINSNIENTYIYLNEKYIGRTPLNKYINATEGVLRAKRMGFKTYEQRIKIHNKFFGNYSLQINLELVDPEKIIKQRQKELSIMVKIKNINENTKLIPVFSLISSELKEHPKYIKKFLKDSIPYLNSTEMFKDFLNSYKAIYSIDQDNSNQEEIWNSLKTNFDLENRAIFWFLENLDKDLKILTKNAPWVKTLAKTLDNENIQLISKNEKINIKLPGFKKINSNKIEKIQNYELNSLDSKNISLKSTYNVKEFLIQEQNVTKYEYQDFLKENPKWALNNKENLIKEQLVDENYLKNFNQIGLNEAITGISYFSAIEYANWYSKKLPTGFKARLPISQEWELYQKEPNKNPLNINEISKKVGFWNLMQNSSFNEIAIFKNEKNFYSENSNFYSLITEIRTYSQQNNNLLNASTKASFLKNWSSPNIGFRLIVSKE.

Residues 27 to 47 form a helical membrane-spanning segment; the sequence is VYVFLTTIILLLSLISTLIII.

The protein localises to the membrane. This is an uncharacterized protein from Borreliella burgdorferi (strain ATCC 35210 / DSM 4680 / CIP 102532 / B31) (Borrelia burgdorferi).